The following is a 405-amino-acid chain: Serine/threonine transporter SstT (405 aa).

Helical transmembrane passes span 13–33 (GNLV…ATFS), 43–63 (IGNL…FILV), 81–101 (IVVL…ILSF), 140–160 (ALMN…GLAL), 191–211 (FGIF…ALAG), 215–235 (LLAV…PMIV), 297–317 (MAGA…TMGI), 338–358 (ASGV…LFGI), and 362–382 (IAMQ…SAET).

This sequence belongs to the dicarboxylate/amino acid:cation symporter (DAACS) (TC 2.A.23) family.

It is found in the cell inner membrane. It carries out the reaction L-serine(in) + Na(+)(in) = L-serine(out) + Na(+)(out). It catalyses the reaction L-threonine(in) + Na(+)(in) = L-threonine(out) + Na(+)(out). Involved in the import of serine and threonine into the cell, with the concomitant import of sodium (symport system). The sequence is that of Serine/threonine transporter SstT from Vibrio cholerae serotype O1 (strain ATCC 39315 / El Tor Inaba N16961).